A 247-amino-acid polypeptide reads, in one-letter code: tRNA (guanine-N(1)-)-methyltransferase (247 aa).

Residues glycine 112 and 132–137 (IGDFVL) each bind S-adenosyl-L-methionine.

The protein belongs to the RNA methyltransferase TrmD family. Homodimer.

Its subcellular location is the cytoplasm. The enzyme catalyses guanosine(37) in tRNA + S-adenosyl-L-methionine = N(1)-methylguanosine(37) in tRNA + S-adenosyl-L-homocysteine + H(+). Its function is as follows. Specifically methylates guanosine-37 in various tRNAs. This is tRNA (guanine-N(1)-)-methyltransferase from Geotalea uraniireducens (strain Rf4) (Geobacter uraniireducens).